The sequence spans 337 residues: Ribosomal RNA small subunit methyltransferase C (337 aa).

The protein belongs to the methyltransferase superfamily. RsmC family. In terms of assembly, monomer.

It is found in the cytoplasm. The catalysed reaction is guanosine(1207) in 16S rRNA + S-adenosyl-L-methionine = N(2)-methylguanosine(1207) in 16S rRNA + S-adenosyl-L-homocysteine + H(+). In terms of biological role, specifically methylates the guanine in position 1207 of 16S rRNA in the 30S particle. The polypeptide is Ribosomal RNA small subunit methyltransferase C (Acinetobacter baumannii (strain AB307-0294)).